Consider the following 64-residue polypeptide: Small ribosomal subunit protein eS17 (64 aa).

This sequence belongs to the eukaryotic ribosomal protein eS17 family.

The polypeptide is Small ribosomal subunit protein eS17 (Natronomonas pharaonis (strain ATCC 35678 / DSM 2160 / CIP 103997 / JCM 8858 / NBRC 14720 / NCIMB 2260 / Gabara) (Halobacterium pharaonis)).